Reading from the N-terminus, the 62-residue chain is Metallothionein-4 (62 aa).

The a divalent metal cation site is built by cysteine 6, cysteine 8, cysteine 14, cysteine 16, cysteine 20, cysteine 22, cysteine 25, cysteine 27, cysteine 30, cysteine 34, cysteine 35, cysteine 37, cysteine 38, cysteine 42, cysteine 45, cysteine 49, cysteine 51, cysteine 58, cysteine 60, and cysteine 61.

It belongs to the metallothionein superfamily. Type 1 family. Expressed exclusively in stratified squamous epithelia associated with oral epithelia, esophagus, upper stomach, tail, footpads and neonatal skin.

Functionally, seems to bind zinc and copper. Could play a special role in regulating zinc metabolism during the differentiation of stratified epithelia. The sequence is that of Metallothionein-4 (Mt4) from Mus musculus (Mouse).